We begin with the raw amino-acid sequence, 77 residues long: Small ribosomal subunit protein bS18 (77 aa).

This sequence belongs to the bacterial ribosomal protein bS18 family. As to quaternary structure, part of the 30S ribosomal subunit. Forms a tight heterodimer with protein bS6.

Binds as a heterodimer with protein bS6 to the central domain of the 16S rRNA, where it helps stabilize the platform of the 30S subunit. The chain is Small ribosomal subunit protein bS18 from Bacillus cytotoxicus (strain DSM 22905 / CIP 110041 / 391-98 / NVH 391-98).